The sequence spans 205 residues: uncharacterized protein (205 aa).

Positions 1–40 (MSAGKSYRKKMKQRRMNMKISKYALGILMLSLVFVLSACG) are cleaved as a signal peptide. The disordered stretch occupies residues 44–82 (STKESTHDNHSDSSTHEEMDHSGSADVPEGLQESKNPKY). The segment covering 47–66 (ESTHDNHSDSSTHEEMDHSG) has biased composition (basic and acidic residues).

This is an uncharacterized protein from Bacillus subtilis (strain 168).